Consider the following 294-residue polypeptide: Probable cobalamin biosynthesis protein CobD (294 aa).

4 consecutive transmembrane segments (helical) span residues 52 to 72, 73 to 93, 145 to 165, and 268 to 288; these read AGLL…IVPF, YAPF…SFAI, DSVV…AVIY, and IYWL…ATGV.

It belongs to the CobD/CbiB family.

The protein localises to the cell membrane. It participates in cofactor biosynthesis; adenosylcobalamin biosynthesis. Converts cobyric acid to cobinamide by the addition of aminopropanol on the F carboxylic group. In Thermococcus kodakarensis (strain ATCC BAA-918 / JCM 12380 / KOD1) (Pyrococcus kodakaraensis (strain KOD1)), this protein is Probable cobalamin biosynthesis protein CobD.